Reading from the N-terminus, the 438-residue chain is Proline--tRNA ligase (438 aa).

It belongs to the class-II aminoacyl-tRNA synthetase family. ProS type 2 subfamily. Homodimer.

Its subcellular location is the cytoplasm. The catalysed reaction is tRNA(Pro) + L-proline + ATP = L-prolyl-tRNA(Pro) + AMP + diphosphate. Functionally, catalyzes the attachment of proline to tRNA(Pro) in a two-step reaction: proline is first activated by ATP to form Pro-AMP and then transferred to the acceptor end of tRNA(Pro). In Rickettsia canadensis (strain McKiel), this protein is Proline--tRNA ligase.